Here is a 429-residue protein sequence, read N- to C-terminus: Serine--tRNA ligase (429 aa).

L-serine is bound at residue 236-238; that stretch reads TAE. 267–269 is an ATP binding site; it reads RSE. Glu-290 is a binding site for L-serine. 354-357 contacts ATP; sequence EISS. Residue Ser-390 participates in L-serine binding.

This sequence belongs to the class-II aminoacyl-tRNA synthetase family. Type-1 seryl-tRNA synthetase subfamily. Homodimer. The tRNA molecule binds across the dimer.

It localises to the cytoplasm. The enzyme catalyses tRNA(Ser) + L-serine + ATP = L-seryl-tRNA(Ser) + AMP + diphosphate + H(+). The catalysed reaction is tRNA(Sec) + L-serine + ATP = L-seryl-tRNA(Sec) + AMP + diphosphate + H(+). The protein operates within aminoacyl-tRNA biosynthesis; selenocysteinyl-tRNA(Sec) biosynthesis; L-seryl-tRNA(Sec) from L-serine and tRNA(Sec): step 1/1. Functionally, catalyzes the attachment of serine to tRNA(Ser). Is also able to aminoacylate tRNA(Sec) with serine, to form the misacylated tRNA L-seryl-tRNA(Sec), which will be further converted into selenocysteinyl-tRNA(Sec). In Alcanivorax borkumensis (strain ATCC 700651 / DSM 11573 / NCIMB 13689 / SK2), this protein is Serine--tRNA ligase.